The sequence spans 253 residues: 5-oxoprolinase subunit A (253 aa).

It belongs to the LamB/PxpA family. Forms a complex composed of PxpA, PxpB and PxpC.

It carries out the reaction 5-oxo-L-proline + ATP + 2 H2O = L-glutamate + ADP + phosphate + H(+). In terms of biological role, catalyzes the cleavage of 5-oxoproline to form L-glutamate coupled to the hydrolysis of ATP to ADP and inorganic phosphate. In Bacillus cereus (strain ATCC 10987 / NRS 248), this protein is 5-oxoprolinase subunit A.